A 253-amino-acid chain; its full sequence is Phosphate import ATP-binding protein PstB 1 (253 aa).

The ABC transporter domain maps to L7–I248. G39–S46 is an ATP binding site.

This sequence belongs to the ABC transporter superfamily. Phosphate importer (TC 3.A.1.7) family. The complex is composed of two ATP-binding proteins (PstB), two transmembrane proteins (PstC and PstA) and a solute-binding protein (PstS).

The protein localises to the cell membrane. The catalysed reaction is phosphate(out) + ATP + H2O = ADP + 2 phosphate(in) + H(+). Its function is as follows. Part of the ABC transporter complex PstSACB involved in phosphate import. Responsible for energy coupling to the transport system. The chain is Phosphate import ATP-binding protein PstB 1 from Lactococcus lactis subsp. lactis (strain IL1403) (Streptococcus lactis).